The sequence spans 180 residues: Acireductone dioxygenase (180 aa).

Fe(2+)-binding residues include H99, H101, E105, and H145. Residues H99, H101, E105, and H145 each contribute to the Ni(2+) site.

Belongs to the acireductone dioxygenase (ARD) family. Monomer. The cofactor is Fe(2+). Ni(2+) serves as cofactor.

It carries out the reaction 1,2-dihydroxy-5-(methylsulfanyl)pent-1-en-3-one + O2 = 3-(methylsulfanyl)propanoate + CO + formate + 2 H(+). It catalyses the reaction 1,2-dihydroxy-5-(methylsulfanyl)pent-1-en-3-one + O2 = 4-methylsulfanyl-2-oxobutanoate + formate + 2 H(+). It participates in amino-acid biosynthesis; L-methionine biosynthesis via salvage pathway; L-methionine from S-methyl-5-thio-alpha-D-ribose 1-phosphate: step 5/6. In terms of biological role, catalyzes 2 different reactions between oxygen and the acireductone 1,2-dihydroxy-3-keto-5-methylthiopentene (DHK-MTPene) depending upon the metal bound in the active site. Fe-containing acireductone dioxygenase (Fe-ARD) produces formate and 2-keto-4-methylthiobutyrate (KMTB), the alpha-ketoacid precursor of methionine in the methionine recycle pathway. Ni-containing acireductone dioxygenase (Ni-ARD) produces methylthiopropionate, carbon monoxide and formate, and does not lie on the methionine recycle pathway. The polypeptide is Acireductone dioxygenase (Geobacillus kaustophilus (strain HTA426)).